Here is a 99-residue protein sequence, read N- to C-terminus: uncharacterized protein (99 aa).

Residues 32 to 79 enclose the TM2 domain; it reads KKSVGIAVLLSFIIPGAGQMYLGRVGKGIILLLTCWLIIPWIYSIYDA. Transmembrane regions (helical) follow at residues 34–54 and 56–76; these read SVGIAVLLSFIIPGAGQMYLG and VGKGIILLLTCWLIIPWIYSI.

The protein resides in the cell membrane. This is an uncharacterized protein from Methanocaldococcus jannaschii (strain ATCC 43067 / DSM 2661 / JAL-1 / JCM 10045 / NBRC 100440) (Methanococcus jannaschii).